Consider the following 313-residue polypeptide: Ribosomal RNA small subunit methyltransferase H (313 aa).

S-adenosyl-L-methionine is bound by residues 35–37 (GGH), D55, F81, D103, and Q110.

This sequence belongs to the methyltransferase superfamily. RsmH family.

It is found in the cytoplasm. The enzyme catalyses cytidine(1402) in 16S rRNA + S-adenosyl-L-methionine = N(4)-methylcytidine(1402) in 16S rRNA + S-adenosyl-L-homocysteine + H(+). Its function is as follows. Specifically methylates the N4 position of cytidine in position 1402 (C1402) of 16S rRNA. The polypeptide is Ribosomal RNA small subunit methyltransferase H (Pseudomonas aeruginosa (strain ATCC 15692 / DSM 22644 / CIP 104116 / JCM 14847 / LMG 12228 / 1C / PRS 101 / PAO1)).